The primary structure comprises 245 residues: tRNA pseudouridine synthase A 2 (245 aa).

D53 serves as the catalytic Nucleophile. Y111 serves as a coordination point for substrate.

It belongs to the tRNA pseudouridine synthase TruA family. Homodimer.

It carries out the reaction uridine(38/39/40) in tRNA = pseudouridine(38/39/40) in tRNA. Its function is as follows. Formation of pseudouridine at positions 38, 39 and 40 in the anticodon stem and loop of transfer RNAs. The protein is tRNA pseudouridine synthase A 2 of Bacillus cereus (strain ATCC 14579 / DSM 31 / CCUG 7414 / JCM 2152 / NBRC 15305 / NCIMB 9373 / NCTC 2599 / NRRL B-3711).